We begin with the raw amino-acid sequence, 482 residues long: tRNA sulfurtransferase (482 aa).

Positions 61–165 constitute a THUMP domain; it reads LAIRDALTRI…DDRLLLIKGR (105 aa). Residues 183 to 184, Lys265, Gly287, and Gln296 contribute to the ATP site; that span reads LI. A disulfide bridge links Cys344 with Cys456. The 79-residue stretch at 404-482 folds into the Rhodanese domain; sequence FGPNDVILDI…GFANVKVYRP (79 aa). Cys456 acts as the Cysteine persulfide intermediate in catalysis.

Belongs to the ThiI family.

The protein resides in the cytoplasm. It carries out the reaction [ThiI sulfur-carrier protein]-S-sulfanyl-L-cysteine + a uridine in tRNA + 2 reduced [2Fe-2S]-[ferredoxin] + ATP + H(+) = [ThiI sulfur-carrier protein]-L-cysteine + a 4-thiouridine in tRNA + 2 oxidized [2Fe-2S]-[ferredoxin] + AMP + diphosphate. It catalyses the reaction [ThiS sulfur-carrier protein]-C-terminal Gly-Gly-AMP + S-sulfanyl-L-cysteinyl-[cysteine desulfurase] + AH2 = [ThiS sulfur-carrier protein]-C-terminal-Gly-aminoethanethioate + L-cysteinyl-[cysteine desulfurase] + A + AMP + 2 H(+). It functions in the pathway cofactor biosynthesis; thiamine diphosphate biosynthesis. Catalyzes the ATP-dependent transfer of a sulfur to tRNA to produce 4-thiouridine in position 8 of tRNAs, which functions as a near-UV photosensor. Also catalyzes the transfer of sulfur to the sulfur carrier protein ThiS, forming ThiS-thiocarboxylate. This is a step in the synthesis of thiazole, in the thiamine biosynthesis pathway. The sulfur is donated as persulfide by IscS. The chain is tRNA sulfurtransferase from Salmonella choleraesuis (strain SC-B67).